We begin with the raw amino-acid sequence, 229 residues long: Heptaprenylglyceryl phosphate synthase (229 aa).

K12 is a sn-glycerol 1-phosphate binding site. Mg(2+) is bound by residues D14 and S40. Sn-glycerol 1-phosphate is bound by residues 159–164 (YLEYSG), G189, and 209–210 (GN).

This sequence belongs to the GGGP/HepGP synthase family. Group I subfamily. Homodimer. The cofactor is Mg(2+).

It carries out the reaction sn-glycerol 1-phosphate + all-trans-heptaprenyl diphosphate = 3-heptaprenyl-sn-glycero-1-phosphate + diphosphate. It functions in the pathway membrane lipid metabolism; glycerophospholipid metabolism. Prenyltransferase that catalyzes in vivo the transfer of the heptaprenyl moiety of heptaprenyl pyrophosphate (HepPP; 35 carbon atoms) to the C3 hydroxyl of sn-glycerol-1-phosphate (G1P), producing heptaprenylglyceryl phosphate (HepGP). This reaction is an ether-bond-formation step in the biosynthesis of archaea-type G1P-based membrane lipids found in Bacillales. The polypeptide is Heptaprenylglyceryl phosphate synthase (Bacillus cereus (strain ATCC 14579 / DSM 31 / CCUG 7414 / JCM 2152 / NBRC 15305 / NCIMB 9373 / NCTC 2599 / NRRL B-3711)).